The chain runs to 1018 residues: Thrombospondin type-1 domain-containing protein 4 (1018 aa).

An N-terminal signal peptide occupies residues 1–26; sequence MVSYLTSCLSALSTLLLLLGSQLVCP. 3 disordered regions span residues 34–56, 116–240, and 534–623; these read KVPQ…SPGV, HRSQ…PSEA, and SPQV…NWKQ. One can recognise a TSP type-1 1 domain in the interval 54–307; that stretch reads PGVWGSWGPW…YKLCNTNACP (254 aa). Residues 187 to 199 are compositionally biased toward basic residues; sequence QRLRRQRPSSRHS. Residues 216–230 are compositionally biased toward polar residues; sequence HQFSHSQPLYQSDSG. Basic and acidic residues-rich tracts occupy residues 558-573 and 592-603; these read QEDR…KEDS and RHPERFPSHRPD. TSP type-1 domains lie at 676–737, 739–792, 793–851, 852–911, and 912–968; these read CPAF…KICS, WQIR…DMGP, CAKS…GPCT, GKVE…HLKP, and CGAK…QDCV. The region spanning 971–1008 is the PLAC domain; the sequence is VDENCKDKYYNCNVVVQARLCVYNYYKTACCASCTRVA.

As to quaternary structure, isoform 2 interacts with FBN1. Isoform 2 may interact with TGFB1. Both isoforms are expressed in the embryo from 7 dpc through 17. Isoform 1 is widely expressed in adult tissues. Isoform 2 is detected in brain, spinal cord, eye, kidney, stomach and uterus. Mainly observed in fibrillar extracellular matrices in elastic tissues (at protein level).

The protein resides in the secreted. It is found in the extracellular space. It localises to the extracellular matrix. In terms of biological role, promotes FBN1 matrix assembly. Attenuates TGFB signaling, possibly by accelerating the sequestration of large latent complexes of TGFB or active TGFB by FBN1 microfibril assembly, thereby negatively regulating the expression of TGFB regulatory targets, such as POSTN. In Mus musculus (Mouse), this protein is Thrombospondin type-1 domain-containing protein 4 (Thsd4).